A 311-amino-acid chain; its full sequence is Lipoyl synthase (311 aa).

[4Fe-4S] cluster-binding residues include Cys55, Cys60, Cys66, Cys81, Cys85, Cys88, and Ser292. The region spanning 67–281 (WEDREATFLI…ARFAEGLGFA (215 aa)) is the Radical SAM core domain.

This sequence belongs to the radical SAM superfamily. Lipoyl synthase family. [4Fe-4S] cluster is required as a cofactor.

The protein resides in the cytoplasm. The enzyme catalyses [[Fe-S] cluster scaffold protein carrying a second [4Fe-4S](2+) cluster] + N(6)-octanoyl-L-lysyl-[protein] + 2 oxidized [2Fe-2S]-[ferredoxin] + 2 S-adenosyl-L-methionine + 4 H(+) = [[Fe-S] cluster scaffold protein] + N(6)-[(R)-dihydrolipoyl]-L-lysyl-[protein] + 4 Fe(3+) + 2 hydrogen sulfide + 2 5'-deoxyadenosine + 2 L-methionine + 2 reduced [2Fe-2S]-[ferredoxin]. The protein operates within protein modification; protein lipoylation via endogenous pathway; protein N(6)-(lipoyl)lysine from octanoyl-[acyl-carrier-protein]: step 2/2. In terms of biological role, catalyzes the radical-mediated insertion of two sulfur atoms into the C-6 and C-8 positions of the octanoyl moiety bound to the lipoyl domains of lipoate-dependent enzymes, thereby converting the octanoylated domains into lipoylated derivatives. The protein is Lipoyl synthase of Mycobacterium bovis (strain ATCC BAA-935 / AF2122/97).